Here is a 260-residue protein sequence, read N- to C-terminus: Tropinone reductase 2 (260 aa).

13-37 is a binding site for NADP(+); the sequence is LVTGGSRGIGYGIVEELANLGASVY. Residue Ser146 coordinates substrate. Tyr159 serves as the catalytic Proton acceptor.

Belongs to the short-chain dehydrogenases/reductases (SDR) family.

It catalyses the reaction pseudotropine + NADP(+) = tropinone + NADPH + H(+). Its pathway is alkaloid biosynthesis; tropane alkaloid biosynthesis. Functionally, catalyzes the stereospecific reduction of tropinone to pseudotropine. The polypeptide is Tropinone reductase 2 (TR2) (Hyoscyamus niger (Black henbane)).